Consider the following 515-residue polypeptide: SWI/SNF global transcription activator complex subunit snf59 (515 aa).

The interval 1–226 is disordered; it reads MEEEDITLEH…IHHVDSKNEE (226 aa). Basic and acidic residues-rich tracts occupy residues 7-37, 50-59, 73-85, 94-103, and 116-125; these read TLEH…DNSN, EEPKYHDNSN, EPEH…KEST, EEPKHHDNSN, and EEPKHHDSSN. Residues 126–136 show a composition bias toward polar residues; sequence KESTNLDNSNM. The span at 140-226 shows a compositional bias: basic and acidic residues; it reads ENQKNFKIEE…IHHVDSKNEE (87 aa).

This sequence belongs to the RSC7/SWP82 family. SWP82 subfamily. Component of the SWI/SNF global transcription activator complex composed of at least arp9, arp42, snf5, snf22, snf30, snf59, sol1, ssr1, ssr2, ssr3, ssr4 and tfg3.

The protein localises to the nucleus. Component of the SWI/SNF complex, an ATP-dependent chromatin remodeling complex, which is required for the positive and negative regulation of gene expression of a large number of genes. It changes chromatin structure by altering DNA-histone contacts within a nucleosome, leading eventually to a change in nucleosome position, thus facilitating or repressing binding of gene-specific transcription factors. The protein is SWI/SNF global transcription activator complex subunit snf59 (snf59) of Schizosaccharomyces pombe (strain 972 / ATCC 24843) (Fission yeast).